A 214-amino-acid polypeptide reads, in one-letter code: Cytochrome b (214 aa).

4 helical membrane passes run 31–51 (FGSMLLICLMLQTLTGFFLAI), 75–96 (WTMQNLHAISASLFFICIYIHI), 111–131 (WLSGVTLLFTLMATAFFGYVL), and 176–196 (FFALHFILPFIIISLSSAHIM). Heme b contacts are provided by His81 and His95. Residues His180 and His194 each coordinate heme b. Position 199 (His199) interacts with a ubiquinone.

Belongs to the cytochrome b family. In terms of assembly, the cytochrome bc1 complex contains 3 respiratory subunits (MT-CYB, CYC1 and UQCRFS1), 2 core proteins (UQCRC1 and UQCRC2) and probably 6 low-molecular weight proteins. Heme b is required as a cofactor.

Its subcellular location is the mitochondrion inner membrane. In terms of biological role, component of the ubiquinol-cytochrome c reductase complex (complex III or cytochrome b-c1 complex) that is part of the mitochondrial respiratory chain. The b-c1 complex mediates electron transfer from ubiquinol to cytochrome c. Contributes to the generation of a proton gradient across the mitochondrial membrane that is then used for ATP synthesis. This is Cytochrome b (MT-CYB) from Elapsoidea semiannulata (Angolan garter snake).